We begin with the raw amino-acid sequence, 314 residues long: Pectin lyase (314 aa).

Arg202 is an active-site residue.

Belongs to the polysaccharide lyase 1 family.

The catalysed reaction is Eliminative cleavage of (1-&gt;4)-alpha-D-galacturonan methyl ester to give oligosaccharides with 4-deoxy-6-O-methyl-alpha-D-galact-4-enuronosyl groups at their non-reducing ends.. The polypeptide is Pectin lyase (pnl) (Pectobacterium carotovorum (Erwinia carotovora)).